The primary structure comprises 224 residues: Pyridoxal 5'-phosphate synthase subunit PdxT (224 aa).

An L-glutamine-binding site is contributed by 55–57; sequence GES. The active-site Nucleophile is Cys-87. Residues Arg-113 and 142 to 143 each bind L-glutamine; that span reads IR. Catalysis depends on charge relay system residues His-178 and Glu-180.

It belongs to the glutaminase PdxT/SNO family. In the presence of PdxS, forms a dodecamer of heterodimers. Only shows activity in the heterodimer.

It carries out the reaction aldehydo-D-ribose 5-phosphate + D-glyceraldehyde 3-phosphate + L-glutamine = pyridoxal 5'-phosphate + L-glutamate + phosphate + 3 H2O + H(+). The enzyme catalyses L-glutamine + H2O = L-glutamate + NH4(+). It participates in cofactor biosynthesis; pyridoxal 5'-phosphate biosynthesis. Its function is as follows. Catalyzes the hydrolysis of glutamine to glutamate and ammonia as part of the biosynthesis of pyridoxal 5'-phosphate. The resulting ammonia molecule is channeled to the active site of PdxS. The protein is Pyridoxal 5'-phosphate synthase subunit PdxT of Syntrophus aciditrophicus (strain SB).